The sequence spans 187 residues: Adenylate kinase 1 (187 aa).

Position 14–19 (G14–T19) interacts with ATP. Positions S34 to V63 are NMP. AMP-binding positions include T35, R40, E61–V63, G89–R92, and Q96. Residues A130–D136 form an LID region. R131 provides a ligand contact to ATP. Positions 133 and 144 each coordinate AMP. An ATP-binding site is contributed by Q172.

Belongs to the adenylate kinase family. As to quaternary structure, monomer.

The protein localises to the cytoplasm. It carries out the reaction AMP + ATP = 2 ADP. The protein operates within purine metabolism; AMP biosynthesis via salvage pathway; AMP from ADP: step 1/1. Catalyzes the reversible transfer of the terminal phosphate group between ATP and AMP. Plays an important role in cellular energy homeostasis and in adenine nucleotide metabolism. This chain is Adenylate kinase 1, found in Synechocystis sp. (strain ATCC 27184 / PCC 6803 / Kazusa).